The sequence spans 221 residues: Probable lipoprotein CT_734 (221 aa).

Residues 1–24 (MKKFIYKYSFGALLLLSGLSGLSS) form the signal peptide. C25 carries the N-palmitoyl cysteine lipid modification. C25 carries the S-diacylglycerol cysteine lipid modification.

This sequence belongs to the chlamydial CPn_0875/CT_734/TC_0107 family.

The protein resides in the cell membrane. This is Probable lipoprotein CT_734 from Chlamydia trachomatis serovar D (strain ATCC VR-885 / DSM 19411 / UW-3/Cx).